A 515-amino-acid chain; its full sequence is RNA-binding region-containing protein 3 (515 aa).

The segment at 1–26 (MAVPEPSMPLSRGGPGSASLSPPRGD) is disordered. Ser21 bears the Phosphoserine mark. The RRM 1 domain occupies 27–102 (RTLLVRHLPA…HTLVVEFAKE (76 aa)). 3 disordered regions span residues 107–133 (HSSC…EKKE), 215–254 (LHAP…EEDR), and 337–369 (ETEQ…PKPN). A Phosphoserine modification is found at Ser108. The span at 115-133 (AEKKKRLDDTVENDKEKKE) shows a compositional bias: basic and acidic residues. Residues 218–230 (PLPPTSPQPPEEP) are compositionally biased toward pro residues. Residues 337–348 (ETEQNNEEKNSD) show a composition bias toward basic and acidic residues. Phosphoserine is present on Ser349. The RRM 2 domain maps to 419-502 (CRIYVKNLAR…KPMVVQFARS (84 aa)).

Component of the U11/U12 snRNPs that are part of the U12-type spliceosome. Found in a complex with m(7)G-capped U12 snRNA. Interacts with PDCD7.

The protein localises to the nucleus. Participates in pre-mRNA U12-dependent splicing, performed by the minor spliceosome which removes U12-type introns. U12-type introns comprises less than 1% of all non-coding sequences. Binds to the 3'-stem-loop of m(7)G-capped U12 snRNA. The protein is RNA-binding region-containing protein 3 (Rnpc3) of Rattus norvegicus (Rat).